The following is a 540-amino-acid chain: ADP,ATP carrier protein 2 (540 aa).

Transmembrane regions (helical) follow at residues 24 to 44 (FSKF…YCLL), 62 to 82 (VIPF…TMVY), 94 to 114 (VFYC…VIIY), 151 to 171 (IYYV…FWGL), 223 to 243 (SVML…IWLY), 295 to 315 (LLGL…FEVV), 337 to 357 (ITTL…GQCI), 367 to 387 (LVTP…IFAA), 391 to 411 (ISIF…WTGG), 458 to 478 (SGGS…AASL), and 480 to 500 (VIAL…AYIG).

Belongs to the ADP/ATP translocase tlc family.

It localises to the cell membrane. The chain is ADP,ATP carrier protein 2 (tlcB) from Chlamydia pneumoniae (Chlamydophila pneumoniae).